The sequence spans 242 residues: 3-dehydroquinate dehydratase (242 aa).

3-dehydroquinate is bound by residues 39–41 (EIR) and arginine 73. Residue histidine 135 is the Proton donor/acceptor of the active site. The active-site Schiff-base intermediate with substrate is lysine 162. 3-dehydroquinate contacts are provided by arginine 203 and glutamine 228.

The protein belongs to the type-I 3-dehydroquinase family. Homodimer.

The catalysed reaction is 3-dehydroquinate = 3-dehydroshikimate + H2O. It participates in metabolic intermediate biosynthesis; chorismate biosynthesis; chorismate from D-erythrose 4-phosphate and phosphoenolpyruvate: step 3/7. In terms of biological role, involved in the third step of the chorismate pathway, which leads to the biosynthesis of aromatic amino acids. Catalyzes the cis-dehydration of 3-dehydroquinate (DHQ) and introduces the first double bond of the aromatic ring to yield 3-dehydroshikimate. The protein is 3-dehydroquinate dehydratase of Methanosarcina mazei (strain ATCC BAA-159 / DSM 3647 / Goe1 / Go1 / JCM 11833 / OCM 88) (Methanosarcina frisia).